A 191-amino-acid polypeptide reads, in one-letter code: Penicillin-binding protein activator LpoB (191 aa).

A signal peptide spans 1 to 16 (MKRILFVILSTMLLAS). A lipid anchor (N-palmitoyl cysteine) is attached at Cys17. Cys17 carries the S-diacylglycerol cysteine lipid modification. The interval 25–48 (QPAPVTPVEPKEKQETTPIEPSEK) is disordered.

The protein belongs to the LpoB family. In terms of assembly, interacts with PBP1b.

Its subcellular location is the cell outer membrane. In terms of biological role, regulator of peptidoglycan synthesis that is essential for the function of penicillin-binding protein 1B (PBP1b). The protein is Penicillin-binding protein activator LpoB of Xenorhabdus nematophila (strain ATCC 19061 / DSM 3370 / CCUG 14189 / LMG 1036 / NCIMB 9965 / AN6).